Here is a 338-residue protein sequence, read N- to C-terminus: Envelope glycoprotein K (338 aa).

Residues 1–30 (MLAVRSLQHLSTVVLITAYGLVLVWYTVFG) form the signal peptide. Over 31-121 (ASPLHRCIYA…VNCLETLWYT (91 aa)) the chain is Extracellular. The interval 31-121 (ASPLHRCIYA…VNCLETLWYT (91 aa)) is involved in fusion. Residues Asn48 and Asn58 are each glycosylated (N-linked (GlcNAc...) asparagine; by host). The helical transmembrane segment at 122 to 140 (RVRLVVVGWFLYLAFVALH) threads the bilayer. The Cytoplasmic portion of the chain corresponds to 141–212 (QRRCMFGVVS…DPVTFLYHRP (72 aa)). Residues 213-233 (AIGVIVGCELMLRFVAVGLIV) traverse the membrane as a helical segment. Over 234-243 (GTAFISRGAC) the chain is Extracellular. The helical transmembrane segment at 244–264 (AITYPLFLTITTWCFVSTIGL) threads the bilayer. At 265–301 (TELYCILRRGPAPKNADKAAAPGRSKGLSGVCGRCCS) the chain is on the cytoplasmic side. Positions 265–301 (TELYCILRRGPAPKNADKAAAPGRSKGLSGVCGRCCS) are interaction with UL20. The chain crosses the membrane as a helical span at residues 302 to 322 (IILSGIAVRLCYIAVVAGVVL). Residues 323 to 338 (VALHYEQEIQRRLFDV) lie on the Extracellular side of the membrane.

This sequence belongs to the alphaherpesvirinae glycoprotein K family. Interacts (via UL20 interaction region) with protein UL20 (via N-terminus); this interaction probably plays a role in the coordinate transport of protein UL20 and gK to the trans-Golgi network (TGN), and is required for the cell surface expression of gK. Post-translationally, N-glycosylated.

It is found in the host cell membrane. Its subcellular location is the host endosome membrane. It localises to the host Golgi apparatus membrane. In terms of biological role, glycoprotein that probably modulates membrane fusion events during secondary envelopment of cytoplasmic capsids that bud into specific trans-Golgi network (TGN)-derived membranes. Also plays a role, together with gB, in virus-induced cell-to-cell fusion (syncytia formation). Seems to block fusion of virions with infected-cell membranes. This is Envelope glycoprotein K (gK) from Homo sapiens (Human).